A 282-amino-acid polypeptide reads, in one-letter code: Trihydroxynaphthalene reductase (282 aa).

NADP(+)-binding residues include Ile41, Asn114, and Arg147. Active-site proton donor residues include Ser164 and Tyr178. NADP(+)-binding residues include Tyr178, Lys182, Ile211, and Thr213. Lys182 functions as the Lowers pKa of active site Tyr in the catalytic mechanism.

Belongs to the short-chain dehydrogenases/reductases (SDR) family. As to quaternary structure, homotetramer.

Its pathway is pigment biosynthesis; melanin biosynthesis. Functionally, catalyzes the NADPH-dependent reduction of 1,3,8-trihydroxynaphthalene (T3HN) into (-)-vermelone. Essential for appressorial penetration of colletotrichum lagenarium. This Colletotrichum orbiculare (strain 104-T / ATCC 96160 / CBS 514.97 / LARS 414 / MAFF 240422) (Cucumber anthracnose fungus) protein is Trihydroxynaphthalene reductase (THR1).